The following is a 153-amino-acid chain: D-aminoacyl-tRNA deacylase (153 aa).

The Gly-cisPro motif, important for rejection of L-amino acids motif lies at 142–143; that stretch reads GP.

Belongs to the DTD family. As to quaternary structure, homodimer.

It localises to the cytoplasm. It carries out the reaction glycyl-tRNA(Ala) + H2O = tRNA(Ala) + glycine + H(+). The enzyme catalyses a D-aminoacyl-tRNA + H2O = a tRNA + a D-alpha-amino acid + H(+). In terms of biological role, an aminoacyl-tRNA editing enzyme that deacylates mischarged D-aminoacyl-tRNAs. Also deacylates mischarged glycyl-tRNA(Ala), protecting cells against glycine mischarging by AlaRS. Acts via tRNA-based rather than protein-based catalysis; rejects L-amino acids rather than detecting D-amino acids in the active site. By recycling D-aminoacyl-tRNA to D-amino acids and free tRNA molecules, this enzyme counteracts the toxicity associated with the formation of D-aminoacyl-tRNA entities in vivo and helps enforce protein L-homochirality. The protein is D-aminoacyl-tRNA deacylase of Cupriavidus necator (strain ATCC 17699 / DSM 428 / KCTC 22496 / NCIMB 10442 / H16 / Stanier 337) (Ralstonia eutropha).